The chain runs to 303 residues: Mycothiol acetyltransferase (303 aa).

2 N-acetyltransferase domains span residues 4-141 (ITVR…RSLA) and 154-303 (IVLR…ANGA). Position 38 (Glu-38) interacts with 1D-myo-inositol 2-(L-cysteinylamino)-2-deoxy-alpha-D-glucopyranoside. Position 80-82 (80-82 (AAV)) interacts with acetyl-CoA. Positions 181, 223, and 234 each coordinate 1D-myo-inositol 2-(L-cysteinylamino)-2-deoxy-alpha-D-glucopyranoside. Residues 238-240 (VGI) and 245-251 (QGRGLGR) each bind acetyl-CoA. Tyr-272 is a 1D-myo-inositol 2-(L-cysteinylamino)-2-deoxy-alpha-D-glucopyranoside binding site. Position 277–282 (277–282 (NTAAVN)) interacts with acetyl-CoA.

This sequence belongs to the acetyltransferase family. MshD subfamily. In terms of assembly, monomer.

The enzyme catalyses 1D-myo-inositol 2-(L-cysteinylamino)-2-deoxy-alpha-D-glucopyranoside + acetyl-CoA = mycothiol + CoA + H(+). Functionally, catalyzes the transfer of acetyl from acetyl-CoA to desacetylmycothiol (Cys-GlcN-Ins) to form mycothiol. The polypeptide is Mycothiol acetyltransferase (Nocardia farcinica (strain IFM 10152)).